Consider the following 362-residue polypeptide: DNA replication and repair protein RecF (362 aa).

Residue 30–37 (GLNAQGKS) participates in ATP binding.

The protein belongs to the RecF family.

The protein resides in the cytoplasm. Functionally, the RecF protein is involved in DNA metabolism; it is required for DNA replication and normal SOS inducibility. RecF binds preferentially to single-stranded, linear DNA. It also seems to bind ATP. The chain is DNA replication and repair protein RecF from Thermoanaerobacter pseudethanolicus (strain ATCC 33223 / 39E) (Clostridium thermohydrosulfuricum).